A 642-amino-acid polypeptide reads, in one-letter code: MAIGKRKESTEVKKKDGSMNKRVKVAKLPKKVDSFSPKKKKNTTSSGSSESDSMSQNDKKKDSSLNESEDEDFAGFGESASENDELESAESEAENDEESSSQKSNSKESHAQRKKLQKERKAMKPFADTSLKAKSLWDKLRQKTSIKAEERKTIIAELFDLIRTNVKQLVFKHDMSRVVQTCVKFGSKQQRETICAELAGSYVDLCKSPYGKYLAIKIFKYGTPKMKEVILGEMYGNVVKMIRHREAAYVVEDAFREFTNLQQQRALICEFYGPEFQVFKDRTQDIHIDKLLIDHPEKRPSIMQNLWKTIEGSIAKGSIGFTMVHRAMLEFINHADSNEAKELLNLTKELIYEFVHTRDGSQVAMKLFALANAKDRKVMLKSLRPYLIETAKDSYGHLVVVAALDCTDDTIMTGKLLQAEFEGELLKLSADKFARRILLYVLVGWEDARYFSKENRELLRSLDSLKAKTSKKDPIVRRNELKATIGPLLISLISKAAGDMIAESLASQVLVDALLYAPCEKEEAVDATLKAFDGNPEQDNHLIHQIHCSRALKTLVQNGHWSGAEKQVVKAEDDLKVASKLIVIIKKYLVEWASGDGAFVVVAVLEALSDSEKQEFLKILRKHKNQLNKSEFRGTKKLLEML.

Residues 1-19 (MAIGKRKESTEVKKKDGSM) are compositionally biased toward basic and acidic residues. A disordered region spans residues 1–124 (MAIGKRKEST…KLQKERKAMK (124 aa)). A phosphoserine mark is found at serine 34 and serine 36. Low complexity predominate over residues 43 to 55 (TTSSGSSESDSMS). Serine 79, serine 81, and serine 88 each carry phosphoserine. Positions 81-99 (SENDELESAESEAENDEES) are enriched in acidic residues. Positions 112–123 (QRKKLQKERKAM) are enriched in basic residues. The 351-residue stretch at 139 to 489 (KLRQKTSIKA…ELKATIGPLL (351 aa)) folds into the PUM-HD domain. Pumilio repeat units lie at residues 160-196 (DLIR…TICA), 197-232 (ELAG…VILG), 233-269 (EMYG…ALIC), 345-381 (NLTK…VMLK), 382-418 (SLRP…KLLQ), and 420-460 (EFEG…ELLR).

It belongs to the PUF6 family.

The protein resides in the nucleus. It localises to the nucleolus. In terms of biological role, RNA-binding protein involved in post-transcriptional regulation. This chain is Pumilio homology domain family member 6 (puf6), found in Schizosaccharomyces pombe (strain 972 / ATCC 24843) (Fission yeast).